We begin with the raw amino-acid sequence, 289 residues long: Aquaporin PIP1-1 (289 aa).

Residues 1–36 are disordered; the sequence is MEGKEEDVRLGANRYSERQPIGTAAQGAGDDKDYKE. Helical transmembrane passes span 58–78 and 93–115; these read IAEFVATFLFLYITILTVMGV and IAWSFGGMIFALVYCTAGISGGH. The NPA 1 motif lies at 117-119; it reads NPA. A run of 3 helical transmembrane segments spans residues 136–156, 178–198, and 212–232; these read IFYIVMQCLGAICGAGVVKGF, GDGLGAEIVGTFILVYTVFSA, and ILAPLPIGFAVFLVHLATIPI. Residues 238–240 carry the NPA 2 motif; it reads NPA. A helical membrane pass occupies residues 260 to 280; sequence IFWVGPFVGAALAAIYHQVII.

Belongs to the MIP/aquaporin (TC 1.A.8) family. PIP (TC 1.A.8.11) subfamily. As to expression, expressed in roots, leaves and anthers.

It is found in the cell membrane. Its function is as follows. May function as water channel to facilitate the transport of water across cell membrane. The polypeptide is Aquaporin PIP1-1 (PIP1-1) (Oryza sativa subsp. japonica (Rice)).